Reading from the N-terminus, the 279-residue chain is Very long chain fatty acid elongase 1 (279 aa).

M1 bears the N-acetylmethionine mark. 7 helical membrane passes run 23–43 (PLMGSPLLITSILLTYVYFIL), 61–81 (FMIVYNFSLVILSLYIVYEFL), 110–130 (VAWLFMLSKVIELMDTVIFIL), 137–154 (VTFLHVFHHSVLPWSWWW), 176–196 (VVMYLYYGLSALGPVAQPYLW), 203–223 (AIQLIQFVLVSLHISQYYFMP), and 231–251 (IIIHLIWMYGTIFFILFSNFW). Residues 275–279 (KVKAN) carry the Di-lysine motif motif.

It belongs to the ELO family. ELOVL1 subfamily. As to quaternary structure, interacts with LASS2, TECR and HSD17B12. Interacts with TECR. As to expression, expressed in a broad variety of tissues. Highly expressed in stomach, lung, kidney, skin and intestine. Moderately expressed in white adipose tissue, liver, spleen, brain, brown adipose tissue, heart and muscle. Weakly expressed in testis.

It localises to the endoplasmic reticulum membrane. It catalyses the reaction a very-long-chain acyl-CoA + malonyl-CoA + H(+) = a very-long-chain 3-oxoacyl-CoA + CO2 + CoA. It carries out the reaction eicosanoyl-CoA + malonyl-CoA + H(+) = 3-oxodocosanoyl-CoA + CO2 + CoA. The enzyme catalyses docosanoyl-CoA + malonyl-CoA + H(+) = 3-oxotetracosanoyl-CoA + CO2 + CoA. The catalysed reaction is tetracosanoyl-CoA + malonyl-CoA + H(+) = 3-oxohexacosanoyl-CoA + CO2 + CoA. It catalyses the reaction (11Z)-eicosenoyl-CoA + malonyl-CoA + H(+) = 3-oxo-(13Z)-docosenoyl-CoA + CO2 + CoA. It carries out the reaction (13Z)-docosenoyl-CoA + malonyl-CoA + H(+) = 3-oxo-(15Z)-tetracosenoyl-CoA + CO2 + CoA. The protein operates within lipid metabolism; fatty acid biosynthesis. In terms of biological role, catalyzes the first and rate-limiting reaction of the four reactions that constitute the long-chain fatty acids elongation cycle. This endoplasmic reticulum-bound enzymatic process allows the addition of 2 carbons to the chain of long- and very long-chain fatty acids (VLCFAs) per cycle. Condensing enzyme that exhibits activity toward saturated and monounsaturated acyl-CoA substrates, with the highest activity towards C22:0 acyl-CoA. May participate in the production of both saturated and monounsaturated VLCFAs of different chain lengths that are involved in multiple biological processes as precursors of membrane lipids and lipid mediators. Important for saturated C24:0 and monounsaturated C24:1 sphingolipid synthesis. Indirectly inhibits RPE65 via production of VLCFAs. In Mus musculus (Mouse), this protein is Very long chain fatty acid elongase 1.